Consider the following 113-residue polypeptide: Ig kappa chain V-II region 26-10 (113 aa).

Residues 1–23 are framework-1; that stretch reads DVVMTQTPLSLPVSLGDQASISC. Cysteine 23 and cysteine 93 are oxidised to a cystine. Residues 24-39 are complementarity-determining-1; it reads RSSQSLVHSNGNTYLN. The interval 40–54 is framework-2; that stretch reads WYLQKAGQSPKLLIY. Residues 55–61 are complementarity-determining-2; sequence KVSNRFS. Residues 62 to 93 form a framework-3 region; the sequence is GVPDRFSGSGSGTDFTLKISRVEAEDLGIYFC. The tract at residues 94 to 102 is complementarity-determining-3; it reads SQTTHVPPT. The interval 103 to 112 is framework-4; sequence FGGGTKLEIK.

The chain is Ig kappa chain V-II region 26-10 from Mus musculus (Mouse).